A 607-amino-acid polypeptide reads, in one-letter code: MATSDSRSSPSSSDTEFADPNPSSDPETNSERVQSQLESMNLSQPSEVSDGSHTEFSGGGDDNDDEVASANGNEGGVSNGGLLREGVAGTSGGEVLLRAENPVEMEAGEEPPSPTSSGYDGERGSSGGATSTYKADDGSEDEIREANVDGDTASQHEAAWLPGKRHVDEDDASTSWRKRKKHFFILSNSGKPIYSRYGDEHKLAGFSATLQAIISFVENGGDRVNLVKAGNHQVVFLVKGPIYLVCISCTDETYEYLRGQLDLLYGQMILILTKSIDRCFEKNAKFDMTPLLGGTDAVFSSLVHSFSWNPATFLHAYTCLPLPYALRQATGTILQEVCASGVLFSLLMCRHKVVSLAGAQKASLHPDDLLLLSNFVMSSESFRTSESFSPICLPRYNAQAFLHAYVHFFDDDTYVILLTTRSDAFHHLKDCRVRLEAVLLKSNILSVVQRSIAEGGMRVEDVPIDRRRRSSTTNQEQDSPGPDISVGTGGPFGLWHFMYRSIYLDQYISSEFSPPVTSHRQQKSLYRAYQKLYASMHVKGLGPHKTQYRRDENYTLLCWVTPDFELYAAFDPLADKAMAIKICNQVCQRVKDVENEVFLQGASPFSW.

Positions 1-14 (MATSDSRSSPSSSD) are enriched in low complexity. Disordered regions lie at residues 1-173 (MATS…DDAS) and 463-486 (PIDRRRRSSTTNQEQDSPGPDISV). Over residues 21–55 (NPSSDPETNSERVQSQLESMNLSQPSEVSDGSHTE) the composition is skewed to polar residues.

It belongs to the MON1/SAND family. As to quaternary structure, interacts with CCZ1A, CCZ1B and RABF2B. Widely expressed at stable levels.

Its subcellular location is the endosome. The protein localises to the prevacuolar compartment. Plays an important role in membrane trafficking through the secretory apparatus. In complex with CCZ1, acts as a guanine exchange factor (GEF) for RABG3F of the Rab7 protein family. Promotes the exchange of GDP to GTP, converting RABG3F from an inactive GDP-bound form into an active GTP-bound form. The RABG3F active form is involved in protein trafficking from prevacuolar compartments (PVCs) to vacuoles. May serve as a linker between Rab5 and Rab7 protein families in PVCs and mediate PVC maturation. The protein is Vacuolar fusion protein MON1 homolog of Arabidopsis thaliana (Mouse-ear cress).